We begin with the raw amino-acid sequence, 278 residues long: Ras-related protein Rab-40A-like (278 aa).

Positions 26, 27, and 28 each coordinate GTP. Ser28 is a binding site for Mg(2+). The segment at 41–49 (SPYSHLGGI) is switch-I. Asp69 provides a ligand contact to Mg(2+). GTP is bound by residues Gly72, Asn126, and Arg127. The tract at residues 72 to 88 (GQGRFCTIFRSYSRGAQ) is switch-II. Residues 175 to 228 (LLRHRLNWLGRPSKVLSLQDLCCRTIVSCTPVHLVDKLPLPIALRSHLKSFSMA) form the SOCS box domain. Residue Cys270 is the site of S-palmitoyl cysteine attachment. A lipid anchor (S-geranylgeranyl cysteine) is attached at Cys275.

The protein belongs to the small GTPase superfamily. Rab family. The cofactor is Mg(2+). In terms of tissue distribution, expressed in brain, lung, heart, skeletal muscle, kidney and liver. Highest expression in brain. Expressed in fetal brain and kidney.

It localises to the membrane. Its subcellular location is the cytoplasm. The protein resides in the mitochondrion. The catalysed reaction is GTP + H2O = GDP + phosphate + H(+). It functions in the pathway protein modification; protein ubiquitination. With respect to regulation, regulated by guanine nucleotide exchange factors (GEFs) which promote the exchange of bound GDP for free GTP. Regulated by GTPase activating proteins (GAPs) which increase the GTP hydrolysis activity. Inhibited by GDP dissociation inhibitors (GDIs). Functionally, may act as substrate-recognition component of the ECS(RAB40) E3 ubiquitin ligase complex which mediates the ubiquitination and subsequent proteasomal degradation of target proteins. The Rab40 subfamily belongs to the Rab family that are key regulators of intracellular membrane trafficking, from the formation of transport vesicles to their fusion with membranes. Rabs cycle between an inactive GDP-bound form and an active GTP-bound form that is able to recruit to membranes different sets of downstream effectors directly responsible for vesicle formation, movement, tethering and fusion. In Homo sapiens (Human), this protein is Ras-related protein Rab-40A-like.